Consider the following 98-residue polypeptide: NADH-ubiquinone oxidoreductase chain 4L (98 aa).

A run of 3 helical transmembrane segments spans residues 1–21 (MPIIYMNITLAFIISLLGMLV), 29–49 (SLLCLEGMMLSLFMMSTLMAL), and 61–81 (IALLVFAACEAAVGLALLVSI).

The protein belongs to the complex I subunit 4L family. As to quaternary structure, core subunit of respiratory chain NADH dehydrogenase (Complex I) which is composed of 45 different subunits.

It localises to the mitochondrion inner membrane. The enzyme catalyses a ubiquinone + NADH + 5 H(+)(in) = a ubiquinol + NAD(+) + 4 H(+)(out). In terms of biological role, core subunit of the mitochondrial membrane respiratory chain NADH dehydrogenase (Complex I) which catalyzes electron transfer from NADH through the respiratory chain, using ubiquinone as an electron acceptor. Part of the enzyme membrane arm which is embedded in the lipid bilayer and involved in proton translocation. The protein is NADH-ubiquinone oxidoreductase chain 4L (MT-ND4L) of Piliocolobus badius (Western red colobus).